Consider the following 344-residue polypeptide: Holliday junction branch migration complex subunit RuvB (344 aa).

Residues 1 to 182 (MRIEALNTAP…FGINSRLDYY (182 aa)) form a large ATPase domain (RuvB-L) region. Residues Ile-21, Arg-22, Gly-63, Lys-66, Thr-67, Thr-68, 129–131 (EDY), Arg-172, Tyr-182, and Arg-219 contribute to the ATP site. Thr-67 is a binding site for Mg(2+). The tract at residues 183–253 (NPELLQSIII…VARRTLESLE (71 aa)) is small ATPAse domain (RuvB-S). The segment at 256–344 (EGGLDDMDKK…GSLFDTAEDG (89 aa)) is head domain (RuvB-H). The DNA site is built by Arg-311 and Arg-316.

Belongs to the RuvB family. Homohexamer. Forms an RuvA(8)-RuvB(12)-Holliday junction (HJ) complex. HJ DNA is sandwiched between 2 RuvA tetramers; dsDNA enters through RuvA and exits via RuvB. An RuvB hexamer assembles on each DNA strand where it exits the tetramer. Each RuvB hexamer is contacted by two RuvA subunits (via domain III) on 2 adjacent RuvB subunits; this complex drives branch migration. In the full resolvosome a probable DNA-RuvA(4)-RuvB(12)-RuvC(2) complex forms which resolves the HJ.

Its subcellular location is the cytoplasm. It carries out the reaction ATP + H2O = ADP + phosphate + H(+). Its function is as follows. The RuvA-RuvB-RuvC complex processes Holliday junction (HJ) DNA during genetic recombination and DNA repair, while the RuvA-RuvB complex plays an important role in the rescue of blocked DNA replication forks via replication fork reversal (RFR). RuvA specifically binds to HJ cruciform DNA, conferring on it an open structure. The RuvB hexamer acts as an ATP-dependent pump, pulling dsDNA into and through the RuvAB complex. RuvB forms 2 homohexamers on either side of HJ DNA bound by 1 or 2 RuvA tetramers; 4 subunits per hexamer contact DNA at a time. Coordinated motions by a converter formed by DNA-disengaged RuvB subunits stimulates ATP hydrolysis and nucleotide exchange. Immobilization of the converter enables RuvB to convert the ATP-contained energy into a lever motion, pulling 2 nucleotides of DNA out of the RuvA tetramer per ATP hydrolyzed, thus driving DNA branch migration. The RuvB motors rotate together with the DNA substrate, which together with the progressing nucleotide cycle form the mechanistic basis for DNA recombination by continuous HJ branch migration. Branch migration allows RuvC to scan DNA until it finds its consensus sequence, where it cleaves and resolves cruciform DNA. The polypeptide is Holliday junction branch migration complex subunit RuvB (Chlorobaculum tepidum (strain ATCC 49652 / DSM 12025 / NBRC 103806 / TLS) (Chlorobium tepidum)).